The primary structure comprises 67 residues: Large ribosomal subunit protein uL30 (67 aa).

Belongs to the universal ribosomal protein uL30 family. In terms of assembly, part of the 50S ribosomal subunit.

This chain is Large ribosomal subunit protein uL30, found in Thermotoga petrophila (strain ATCC BAA-488 / DSM 13995 / JCM 10881 / RKU-1).